Consider the following 643-residue polypeptide: Alpha-dioxygenase PIOX (643 aa).

Residue H168 is the Proton acceptor of the active site. D169 serves as a coordination point for Ca(2+). H173 contacts heme b. T221, W223, D225, and S227 together coordinate Ca(2+). Residues H393, R490, and R494 each contribute to the heme b site.

It belongs to the peroxidase family. Heme b is required as a cofactor. Ca(2+) serves as cofactor.

The enzyme catalyses hexadecanoate + O2 = (2R)-2-hydroperoxyhexadecanoate. It carries out the reaction dodecanoate + O2 = (2R)-2-hydroperoxydodecanoate. Alpha-dioxygenase that catalyzes the primary oxygenation step of a variety of 14-20 carbon fatty acids, containing up to three unsaturated bonds, into their corresponding 2R-hydroperoxides. Involved in the production of oxylipins that function in cell signaling, wound healing, and protection from infection. The alpha-oxidation pathway of fatty acids may play a role during plant developmental processes. In Pisum sativum (Garden pea), this protein is Alpha-dioxygenase PIOX.